The sequence spans 255 residues: MVKLTAELIEQAAQYTNAVRDRELDLRGYKIPVIENLGATLDQFDAIDFSDNEIRKLDGFPLLRRLKTLLVNNNRICRIGEGLDQALPCLTELILTNNSLVELGDLDPLASLKSLTYLSILRNPVTNKKHYRLYVIYKVPQVRVLDFQKVKLKERQEAEKMFKGKRGAQLAKDIARRSKTFNPGAGLPTDKKKGGPSAGDVEAIKNAIANASTLAEVERLKGLLQSGQIPGRERRSGPSDEGEEEIEDDTVTNGS.

4 LRR repeats span residues R20–L41, Q43–R64, R65–A86, and C89–A110. The 39-residue stretch at N123–M161 folds into the LRRCT domain. K172 is modified (N6-acetyllysine; alternate). K172 participates in a covalent cross-link: Glycyl lysine isopeptide (Lys-Gly) (interchain with G-Cter in SUMO2); alternate. A phosphoserine mark is found at S178 and S197. The segment at K179–G199 is disordered. K221 is covalently cross-linked (Glycyl lysine isopeptide (Lys-Gly) (interchain with G-Cter in SUMO2)). The interval G222 to S255 is disordered. Residues S236 and S255 each carry the phosphoserine modification. The segment covering D240–S255 has biased composition (acidic residues).

The protein belongs to the U2 small nuclear ribonucleoprotein A family. As to quaternary structure, identified in the spliceosome B complex. Identified in the spliceosome C complex. Found in a pre-mRNA splicing complex with SFRS4, SFRS5, SNRNP70, SNRPA1, SRRM1 and SRRM2. Found in a pre-mRNA exonic splicing enhancer (ESE) complex with SNRNP70, SNRPA1, SRRM1 and TRA2B. Contributes to the binding of stem loop IV of U2 snRNA with SNRPB2.

It localises to the nucleus. Involved in pre-mRNA splicing as component of the spliceosome. Associated with sn-RNP U2, where it contributes to the binding of stem loop IV of U2 snRNA. This is U2 small nuclear ribonucleoprotein A' (Snrpa1) from Mus musculus (Mouse).